Consider the following 677-residue polypeptide: Methionine--tRNA ligase (677 aa).

Residues 15 to 25 carry the 'HIGH' region motif; sequence PYANGSIHLGH. The Zn(2+) site is built by Cys-146, Cys-149, Cys-159, and Cys-162. The 'KMSKS' region motif lies at 333–337; the sequence is KMSKS. Lys-336 lines the ATP pocket. In terms of domain architecture, tRNA-binding spans 575–677; the sequence is DFAKIDLRVA…DGAKPGQQVK (103 aa).

It belongs to the class-I aminoacyl-tRNA synthetase family. MetG type 1 subfamily. As to quaternary structure, homodimer. It depends on Zn(2+) as a cofactor.

The protein localises to the cytoplasm. It carries out the reaction tRNA(Met) + L-methionine + ATP = L-methionyl-tRNA(Met) + AMP + diphosphate. In terms of biological role, is required not only for elongation of protein synthesis but also for the initiation of all mRNA translation through initiator tRNA(fMet) aminoacylation. In Salmonella paratyphi C (strain RKS4594), this protein is Methionine--tRNA ligase.